Consider the following 285-residue polypeptide: ATP phosphoribosyltransferase (285 aa).

The protein belongs to the ATP phosphoribosyltransferase family. Long subfamily. The cofactor is Mg(2+).

Its subcellular location is the cytoplasm. The enzyme catalyses 1-(5-phospho-beta-D-ribosyl)-ATP + diphosphate = 5-phospho-alpha-D-ribose 1-diphosphate + ATP. The protein operates within amino-acid biosynthesis; L-histidine biosynthesis; L-histidine from 5-phospho-alpha-D-ribose 1-diphosphate: step 1/9. Its activity is regulated as follows. Feedback inhibited by histidine. In terms of biological role, catalyzes the condensation of ATP and 5-phosphoribose 1-diphosphate to form N'-(5'-phosphoribosyl)-ATP (PR-ATP). Has a crucial role in the pathway because the rate of histidine biosynthesis seems to be controlled primarily by regulation of HisG enzymatic activity. The polypeptide is ATP phosphoribosyltransferase (Sulfurisphaera tokodaii (strain DSM 16993 / JCM 10545 / NBRC 100140 / 7) (Sulfolobus tokodaii)).